The sequence spans 278 residues: Large ribosomal subunit protein uL2 (278 aa).

2 disordered regions span residues 1-53 (MAIR…TTRH) and 224-278 (VVMN…NKKR). The segment covering 23–33 (EITRSTPEKSL) has biased composition (basic and acidic residues). Over residues 258–267 (RNPNRYSNNM) the composition is skewed to polar residues. The segment covering 269-278 (VRRRRPNKKR) has biased composition (basic residues).

It belongs to the universal ribosomal protein uL2 family. As to quaternary structure, part of the 50S ribosomal subunit. Forms a bridge to the 30S subunit in the 70S ribosome.

Its function is as follows. One of the primary rRNA binding proteins. Required for association of the 30S and 50S subunits to form the 70S ribosome, for tRNA binding and peptide bond formation. It has been suggested to have peptidyltransferase activity; this is somewhat controversial. Makes several contacts with the 16S rRNA in the 70S ribosome. The polypeptide is Large ribosomal subunit protein uL2 (Corynebacterium aurimucosum (strain ATCC 700975 / DSM 44827 / CIP 107346 / CN-1) (Corynebacterium nigricans)).